We begin with the raw amino-acid sequence, 241 residues long: tRNA pseudouridine synthase A (241 aa).

The active-site Nucleophile is Asp53. Tyr110 serves as a coordination point for substrate.

This sequence belongs to the tRNA pseudouridine synthase TruA family. As to quaternary structure, homodimer.

It catalyses the reaction uridine(38/39/40) in tRNA = pseudouridine(38/39/40) in tRNA. Functionally, formation of pseudouridine at positions 38, 39 and 40 in the anticodon stem and loop of transfer RNAs. The protein is tRNA pseudouridine synthase A of Malacoplasma penetrans (strain HF-2) (Mycoplasma penetrans).